Here is an 846-residue protein sequence, read N- to C-terminus: Leucine--tRNA ligase (846 aa).

Residues 47–57 (PYPSGRIHMGH) carry the 'HIGH' region motif. A 'KMSKS' region motif is present at residues 621 to 625 (KMSKS). Residue K624 participates in ATP binding.

This sequence belongs to the class-I aminoacyl-tRNA synthetase family.

The protein resides in the cytoplasm. The enzyme catalyses tRNA(Leu) + L-leucine + ATP = L-leucyl-tRNA(Leu) + AMP + diphosphate. The sequence is that of Leucine--tRNA ligase from Zymomonas mobilis subsp. mobilis (strain ATCC 31821 / ZM4 / CP4).